A 241-amino-acid chain; its full sequence is Small ribosomal subunit protein uS2 (241 aa).

The protein belongs to the universal ribosomal protein uS2 family.

In Shigella flexneri serotype 5b (strain 8401), this protein is Small ribosomal subunit protein uS2.